The primary structure comprises 763 residues: 5-methyltetrahydropteroyltriglutamate--homocysteine methyltransferase (763 aa).

5-methyltetrahydropteroyltri-L-glutamate-binding positions include 16 to 19 (RELK) and Lys114. L-homocysteine contacts are provided by residues 438 to 440 (IGS) and Glu491. Residues 438-440 (IGS) and Glu491 each bind L-methionine. 5-methyltetrahydropteroyltri-L-glutamate is bound by residues 522 to 523 (RC) and Trp568. Asp606 provides a ligand contact to L-homocysteine. Asp606 contributes to the L-methionine binding site. Glu612 contributes to the 5-methyltetrahydropteroyltri-L-glutamate binding site. Zn(2+)-binding residues include His648, Cys650, and Glu672. Catalysis depends on His701, which acts as the Proton donor. A Zn(2+)-binding site is contributed by Cys733.

This sequence belongs to the vitamin-B12 independent methionine synthase family. Zn(2+) serves as cofactor.

The catalysed reaction is 5-methyltetrahydropteroyltri-L-glutamate + L-homocysteine = tetrahydropteroyltri-L-glutamate + L-methionine. The protein operates within amino-acid biosynthesis; L-methionine biosynthesis via de novo pathway; L-methionine from L-homocysteine (MetE route): step 1/1. Functionally, catalyzes the transfer of a methyl group from 5-methyltetrahydrofolate to homocysteine resulting in methionine formation. In Parvibaculum lavamentivorans (strain DS-1 / DSM 13023 / NCIMB 13966), this protein is 5-methyltetrahydropteroyltriglutamate--homocysteine methyltransferase.